Reading from the N-terminus, the 161-residue chain is 2-C-methyl-D-erythritol 2,4-cyclodiphosphate synthase (161 aa).

Positions 8 and 10 each coordinate a divalent metal cation. Residues 8–10 (DLH) and 34–35 (HS) contribute to the 4-CDP-2-C-methyl-D-erythritol 2-phosphate site. An a divalent metal cation-binding site is contributed by histidine 42. 4-CDP-2-C-methyl-D-erythritol 2-phosphate-binding positions include 56–58 (DIG), 100–106 (AEYPKML), and arginine 142.

It belongs to the IspF family. Homotrimer. A divalent metal cation serves as cofactor.

The enzyme catalyses 4-CDP-2-C-methyl-D-erythritol 2-phosphate = 2-C-methyl-D-erythritol 2,4-cyclic diphosphate + CMP. The protein operates within isoprenoid biosynthesis; isopentenyl diphosphate biosynthesis via DXP pathway; isopentenyl diphosphate from 1-deoxy-D-xylulose 5-phosphate: step 4/6. Its function is as follows. Involved in the biosynthesis of isopentenyl diphosphate (IPP) and dimethylallyl diphosphate (DMAPP), two major building blocks of isoprenoid compounds. Catalyzes the conversion of 4-diphosphocytidyl-2-C-methyl-D-erythritol 2-phosphate (CDP-ME2P) to 2-C-methyl-D-erythritol 2,4-cyclodiphosphate (ME-CPP) with a corresponding release of cytidine 5-monophosphate (CMP). This chain is 2-C-methyl-D-erythritol 2,4-cyclodiphosphate synthase, found in Buchnera aphidicola subsp. Acyrthosiphon pisum (strain 5A).